The following is a 1006-amino-acid chain: Phosphatidylinositol 4,5-bisphosphate 5-phosphatase A (1006 aa).

The interval 1 to 416 (MEGQSSRGSR…SSSPWSAQPT (416 aa)) is disordered. The segment covering 27-41 (VAQTGAPSKVDSSFQ) has biased composition (polar residues). An Asymmetric dimethylarginine; alternate modification is found at Arg56. Arg56 bears the Omega-N-methylarginine; alternate mark. Omega-N-methylarginine is present on Arg65. At Arg76 the chain carries Asymmetric dimethylarginine. Residue Arg83 is modified to Asymmetric dimethylarginine; alternate. Arg83 carries the omega-N-methylarginine; alternate modification. Polar residues predominate over residues 94–112 (GQKTATAHRSSSLAPTSVG). The short motif at 102–107 (RSSSLA) is the RSXSXX motif 1 element. Positions 180-193 (LAASGLSLALASEE) are enriched in low complexity. A compositionally biased stretch (pro residues) spans 196 to 209 (PELPSTPSPVPSPV). Residues 210 to 234 (LSPTQEQALAPASTASGAASVGQTS) are compositionally biased toward low complexity. The segment covering 256-273 (PAQTSGPTGSPPCIQTSP) has biased composition (polar residues). 2 positions are modified to phosphoserine: Ser291 and Ser324. Residues 337–347 (VPPPLPKPPRS) are compositionally biased toward pro residues. An SH3-binding motif is present at residues 345–350 (PRSPSR). 2 stretches are compositionally biased toward low complexity: residues 348–360 (PSRS…NRSP) and 398–409 (TTSSSTSTLSSS). Residues 350–355 (RSPSHS) carry the RSXSXX motif 2 motif. The catalytic stretch occupies residues 425 to 728 (ITVVTWNVGT…SDHKPVAAQF (304 aa)). The required for ruffle localization stretch occupies residues 729 to 840 (LLQFAFRDDM…IGITEPFQIS (112 aa)). Positions 844 to 858 (SELASSSTDSSGTSS) are enriched in low complexity. Residues 844-1006 (SELASSSTDS…RGLEEGGLGP (163 aa)) are disordered. Short sequence motifs (RSXSXX motif) lie at residues 874 to 879 (RSPSPG) and 885 to 890 (RSRSPG). A Phosphoserine modification is found at Ser903. An RSXSXX motif 5 motif is present at residues 911–916 (RSPSPQ). Positions 927 to 946 (RSSNGSSRGSSEEGPSGLPG) are enriched in low complexity. Position 990 is a phosphoserine (Ser990).

It belongs to the inositol 1,4,5-trisphosphate 5-phosphatase type II family.

It is found in the cytoplasm. It catalyses the reaction 1D-myo-inositol 1,4,5-trisphosphate + H2O = 1D-myo-inositol 1,4-bisphosphate + phosphate. The catalysed reaction is 1D-myo-inositol 1,3,4,5-tetrakisphosphate + H2O = 1D-myo-inositol 1,3,4-trisphosphate + phosphate. The enzyme catalyses a 1,2-diacyl-sn-glycero-3-phospho-(1D-myo-inositol-4,5-bisphosphate) + H2O = a 1,2-diacyl-sn-glycero-3-phospho-(1D-myo-inositol 4-phosphate) + phosphate. Inositol 5-phosphatase, which converts inositol 1,4,5-trisphosphate to inositol 1,4-bisphosphate. Also converts phosphatidylinositol 4,5-bisphosphate to phosphatidylinositol 4-phosphate and inositol 1,3,4,5-tetrakisphosphate to inositol 1,3,4-trisphosphate in vitro. May be involved in modulation of the function of inositol and phosphatidylinositol polyphosphate-binding proteins that are present at membranes ruffles. The protein is Phosphatidylinositol 4,5-bisphosphate 5-phosphatase A (INPP5J) of Homo sapiens (Human).